The following is a 547-amino-acid chain: Pyochelin synthase PchD (547 aa).

It belongs to the ATP-dependent AMP-binding enzyme family.

The catalysed reaction is salicylate + holo-[ACP] + ATP = salicyl-[ACP] + AMP + diphosphate. It participates in siderophore biosynthesis. The protein operates within antifungal biosynthesis. Functionally, involved in the biosynthesis of the siderophore pyochelin. Specifically adenylates salicylate and loads it onto the holo form of PchE via a thioester linkage to the phosphopanthetheine moiety. Is also involved in the synthesis of the antifungal antibiotic dihydroaeruginoic acid (Dha or hydroxyphenyl-thiazolinyl-carboxylate), a precursor of pyochelin. In Pseudomonas aeruginosa (strain UCBPP-PA14), this protein is Pyochelin synthase PchD.